Consider the following 897-residue polypeptide: High molecular weight rhoptry protein 3 (897 aa).

A signal peptide spans M1–G24. 5 disulfide bridges follow: C157–C231, C244–C253, C262–C276, C421–C620, and C475–C536. Residues F597–Y615 form a helical membrane-spanning segment. Disordered stretches follow at residues K788–K845 and Q859–L897. The segment covering K792–D801 has biased composition (polar residues). Residues E802 to G817 are compositionally biased toward low complexity. S804 is subject to Phosphoserine; by CDPK1. Positions G820–M832 are enriched in basic and acidic residues. Residues P865 to R876 show a composition bias toward basic residues. The span at D877–K889 shows a compositional bias: basic and acidic residues.

As to quaternary structure, component of the RhopH complex. RhopH complex is composed of CLAG3.1/CLAG3.2, RhopH2 and RhopH3 with a 1:1:1 subunit stoichiometry. Interacts with CLAG3.1/CLAG3.2. Interacts with CDPK1; the interaction promotes RhopH3 phosphorylation in merozoites. In terms of processing, proteolytically cleaved near C-terminus.

The protein localises to the host cell membrane. It is found in the parasitophorous vacuole membrane. Its subcellular location is the cytoplasm. The protein resides in the cytoplasmic vesicle. It localises to the secretory vesicle. The protein localises to the rhoptry. Its function is as follows. Participates in the formation of new permeability pathways in Plasmodium-infected erythrocytes enabling the uptake of nutrients from the blood plasma. Required for maintaining invasion capacity of merozoites. Required for the trophozoite to schizont developmental transition of the intracellular parasite. This Plasmodium falciparum (isolate 3D7) protein is High molecular weight rhoptry protein 3.